The chain runs to 359 residues: Protein mab-21-like 2-B (359 aa).

It belongs to the mab-21 family.

Its subcellular location is the nucleus. The protein resides in the cytoplasm. In terms of biological role, required for several aspects of embryonic development including normal development of the eye. This Xenopus laevis (African clawed frog) protein is Protein mab-21-like 2-B (mab21l2-b).